The chain runs to 101 residues: Small ribosomal subunit protein uS14 (101 aa).

Belongs to the universal ribosomal protein uS14 family. In terms of assembly, part of the 30S ribosomal subunit. Contacts proteins S3 and S10.

In terms of biological role, binds 16S rRNA, required for the assembly of 30S particles and may also be responsible for determining the conformation of the 16S rRNA at the A site. This is Small ribosomal subunit protein uS14 from Blochmanniella floridana.